The chain runs to 143 residues: UPF0201 protein Msed_1787 (143 aa).

It belongs to the UPF0201 family.

This chain is UPF0201 protein Msed_1787, found in Metallosphaera sedula (strain ATCC 51363 / DSM 5348 / JCM 9185 / NBRC 15509 / TH2).